The sequence spans 485 residues: Glutamate--tRNA ligase (485 aa).

Positions 12–22 match the 'HIGH' region motif; that stretch reads PSPTGYMHVGN. The Zn(2+) site is built by Cys-109, Cys-111, Cys-136, and His-138. The 'KMSKS' region motif lies at 253-257; it reads KLSKR. ATP is bound at residue Lys-256.

It belongs to the class-I aminoacyl-tRNA synthetase family. Glutamate--tRNA ligase type 1 subfamily. In terms of assembly, monomer. It depends on Zn(2+) as a cofactor.

Its subcellular location is the cytoplasm. It catalyses the reaction tRNA(Glu) + L-glutamate + ATP = L-glutamyl-tRNA(Glu) + AMP + diphosphate. Functionally, catalyzes the attachment of glutamate to tRNA(Glu) in a two-step reaction: glutamate is first activated by ATP to form Glu-AMP and then transferred to the acceptor end of tRNA(Glu). This chain is Glutamate--tRNA ligase, found in Clostridium botulinum (strain Eklund 17B / Type B).